A 1120-amino-acid polypeptide reads, in one-letter code: Hachiman protein HamB (1120 aa).

The 175-residue stretch at 278-452 folds into the Helicase ATP-binding domain; that stretch reads DGELLKNDGF…WIGEDDKAKR (175 aa). An ATP-binding site is contributed by 291 to 298; it reads MPTSSGKT. Positions 395 to 398 match the DEAH box motif; that stretch reads DEGH. Residues 521–710 form the Helicase C-terminal domain; sequence ATATKMLDVG…NIEKATSGLY (190 aa).

The protein belongs to the helicase family.

Its function is as follows. Component of antiviral defense system Hachiman, composed of HamA and HamB. Expression of Hachiman in B.subtilis (strain BEST7003) confers resistance to phages phi105, phi29, phi3T, rho14, SBSphiJ, SpBeta and SPR. Probably a helicase. This Bacillus cereus protein is Hachiman protein HamB.